We begin with the raw amino-acid sequence, 103 residues long: Large ribosomal subunit protein bL21 (103 aa).

This sequence belongs to the bacterial ribosomal protein bL21 family. In terms of assembly, part of the 50S ribosomal subunit. Contacts protein L20.

Its function is as follows. This protein binds to 23S rRNA in the presence of protein L20. This chain is Large ribosomal subunit protein bL21, found in Kineococcus radiotolerans (strain ATCC BAA-149 / DSM 14245 / SRS30216).